The chain runs to 299 residues: SET domain-containing protein 9 (299 aa).

Positions F122–Y295 constitute an SET domain. An S-adenosyl-L-methionine-binding site is contributed by Y294.

Belongs to the class V-like SAM-binding methyltransferase superfamily.

The protein is SET domain-containing protein 9 (SETD9) of Homo sapiens (Human).